The primary structure comprises 134 residues: Insulin-like peptide 4 (134 aa).

Positions 1–26 (MSLIRLGLALLLLLATVSQLLQPVQG) are cleaved as a signal peptide. 3 disulfides stabilise this stretch: C31–C120, C43–C133, and C119–C124. Positions 54 to 108 (SSASKDARVRDLIRKLQQPDEDIEQETETGRLKQKHTDADTEKGVPPAVGSGRKL) are cleaved as a propeptide — connecting peptide. A disordered region spans residues 72–107 (PDEDIEQETETGRLKQKHTDADTEKGVPPAVGSGRK). Positions 81-96 (ETGRLKQKHTDADTEK) are enriched in basic and acidic residues.

It belongs to the insulin family. As to quaternary structure, heterodimer of a B chain and an A chain linked by two disulfide bonds. In terms of tissue distribution, expressed at a high level in the embryonic mesoderm, with expression continuing after gastrulation and reducing from stage 12 onwards. Highly expressed in the embryonic anterior midgut rudiment and larval midgut.

The protein resides in the secreted. Its function is as follows. Possible ligand of InR/insulin-like receptor. The sequence is that of Insulin-like peptide 4 from Drosophila melanogaster (Fruit fly).